We begin with the raw amino-acid sequence, 257 residues long: Ribosome-recycling factor, mitochondrial (257 aa).

This sequence belongs to the RRF family.

It is found in the mitochondrion. Its function is as follows. Necessary for protein synthesis in mitochondria. Functions as a ribosome recycling factor in mitochondria. This chain is Ribosome-recycling factor, mitochondrial (RRF1), found in Debaryomyces hansenii (strain ATCC 36239 / CBS 767 / BCRC 21394 / JCM 1990 / NBRC 0083 / IGC 2968) (Yeast).